The following is a 790-amino-acid chain: Accumulates dyads protein 3 (790 aa).

Residues 8 to 122 (LNKPESLKEQ…NTLKSPNKFL (115 aa)) form a disordered region. Positions 39–49 (PESKPFRERRS) are enriched in basic and acidic residues. Composition is skewed to polar residues over residues 50-78 (QTWIDSEVPTSTEKSNVQESISSDIISKL) and 89-108 (ESWAGSEASSPSGNISTLEN). Coiled coils occupy residues 241-328 (ISKE…REEK), 361-430 (LVSE…RLND), 477-498 (KNLENMEQYKQLKGKIELLEKN), and 540-658 (QQFR…LKKL).

As to quaternary structure, interacts directly with SSP1. Probable component of a SPB complex composed of ADY3, SSP1, DON1, MPC54, SPO21/MPC70, NUD1 and CNM67. Post-translationally, phosphorylated.

It is found in the prospore membrane. It localises to the cytoplasm. Its subcellular location is the cytoskeleton. The protein localises to the microtubule organizing center. The protein resides in the spindle pole body. Functionally, involved in the pathway that organizes the prospore membrane (PSM) during sporulation. Mediates the assembly of the DON1 ring structure at the leading edge of PSM during meiosis II. May constitute a physical link between SSP1-containing PSM precursors and the spindle pole body (SPB) and may facilitate the recruitment of other factors that are required to promote spore wall formation. This chain is Accumulates dyads protein 3 (ADY3), found in Saccharomyces cerevisiae (strain ATCC 204508 / S288c) (Baker's yeast).